The chain runs to 314 residues: Acetyl-coenzyme A carboxylase carboxyl transferase subunit beta (314 aa).

The 271-residue stretch at leucine 37–alanine 307 folds into the CoA carboxyltransferase N-terminal domain. Zn(2+)-binding residues include cysteine 41, cysteine 44, cysteine 60, and cysteine 63. Residues cysteine 41–cysteine 63 form a C4-type zinc finger.

The protein belongs to the AccD/PCCB family. In terms of assembly, acetyl-CoA carboxylase is a heterohexamer composed of biotin carboxyl carrier protein (AccB), biotin carboxylase (AccC) and two subunits each of ACCase subunit alpha (AccA) and ACCase subunit beta (AccD). The cofactor is Zn(2+).

Its subcellular location is the cytoplasm. The catalysed reaction is N(6)-carboxybiotinyl-L-lysyl-[protein] + acetyl-CoA = N(6)-biotinyl-L-lysyl-[protein] + malonyl-CoA. It participates in lipid metabolism; malonyl-CoA biosynthesis; malonyl-CoA from acetyl-CoA: step 1/1. Functionally, component of the acetyl coenzyme A carboxylase (ACC) complex. Biotin carboxylase (BC) catalyzes the carboxylation of biotin on its carrier protein (BCCP) and then the CO(2) group is transferred by the transcarboxylase to acetyl-CoA to form malonyl-CoA. This chain is Acetyl-coenzyme A carboxylase carboxyl transferase subunit beta, found in Synechococcus sp. (strain JA-2-3B'a(2-13)) (Cyanobacteria bacterium Yellowstone B-Prime).